An 813-amino-acid chain; its full sequence is G-type lectin S-receptor-like serine/threonine-protein kinase LECRK1 (813 aa).

Positions 1-19 are cleaved as a signal peptide; sequence MVALLLFPMLLQLLSPTCA. Topologically, residues 20–466 are extracellular; the sequence is QTQKNITLGS…NRKHWVLGSS (447 aa). One can recognise a Bulb-type lectin domain in the interval 22–149; it reads QKNITLGSTL…DGTTKWQTFD (128 aa). Asn24, Asn57, Asn164, Asn168, Asn219, and Asn242 each carry an N-linked (GlcNAc...) asparagine glycan. One can recognise an EGF-like; atypical domain in the interval 293 to 346; it reads PQNICHAIVSDVGSGVCGFNSYCTFDGTRNQIASCQCPPWYKFFDEQKKYKGCK. 5 cysteine pairs are disulfide-bonded: Cys297-Cys315, Cys309-Cys327, Cys329-Cys345, Cys391-Cys413, and Cys395-Cys401. The 80-residue stretch at 354–433 folds into the PAN domain; sequence CDLDEATALA…NMADYVQRTV (80 aa). N-linked (GlcNAc...) asparagine glycosylation is found at Asn407 and Asn441. Residues 467 to 487 form a helical membrane-spanning segment; the sequence is LILGTSILVNFALISIFLFGT. Over 488-813 the chain is Cytoplasmic; that stretch reads YCRIATKKNI…DPCSFISSLP (326 aa). In terms of domain architecture, Protein kinase spans 523 to 797; that stretch reads AGFHEILGAG…KVTQMLDGAV (275 aa). ATP contacts are provided by residues 529 to 537 and Lys553; that span reads LGAGASGVV. The active-site Proton acceptor is the Asp647.

The protein belongs to the protein kinase superfamily. Ser/Thr protein kinase family.

Its subcellular location is the membrane. It carries out the reaction L-seryl-[protein] + ATP = O-phospho-L-seryl-[protein] + ADP + H(+). The catalysed reaction is L-threonyl-[protein] + ATP = O-phospho-L-threonyl-[protein] + ADP + H(+). Involved in innate immunity. Required for the expression of defense-related genes PR1A, LOX2 and CHS1 upon biotic stresses. Required for basal resistance to the fungal blast (M.grisea), bacterial blight (X.oryzae pv. oryzae, Xoo) and the herbivorous insect brown planthopper (N.lugens, BPH). May be involved in several defense signaling pathways. Involved in the promotion of seed germination. Required for the expression of alpha-amylase genes during seed germination. Involved in resistance against the herbivorous insect brown planthopper (N.lugens, BPH). Member of the BPH3 (BPH resistance locus 3) cluster which contains LECRK1, LECRK2 and LECRK3. This chain is G-type lectin S-receptor-like serine/threonine-protein kinase LECRK1, found in Oryza sativa subsp. japonica (Rice).